The primary structure comprises 103 residues: Large ribosomal subunit protein uL24 (103 aa).

Belongs to the universal ribosomal protein uL24 family. As to quaternary structure, part of the 50S ribosomal subunit.

Functionally, one of two assembly initiator proteins, it binds directly to the 5'-end of the 23S rRNA, where it nucleates assembly of the 50S subunit. One of the proteins that surrounds the polypeptide exit tunnel on the outside of the subunit. This chain is Large ribosomal subunit protein uL24, found in Bacillus mycoides (strain KBAB4) (Bacillus weihenstephanensis).